Consider the following 497-residue polypeptide: tRNA-2-methylthio-N(6)-dimethylallyladenosine synthase (497 aa).

An MTTase N-terminal domain is found at 4–120; sequence RSYEVRTFGC…LPVLLERARH (117 aa). [4Fe-4S] cluster is bound by residues C13, C49, C83, C157, C161, and C164. The Radical SAM core domain maps to 143-374; it reads RASHHSAWVS…ALQDEVSWAQ (232 aa). Residues 376 to 445 form the TRAM domain; it reads RELVGRRVEL…PHHLTADGPL (70 aa).

It belongs to the methylthiotransferase family. MiaB subfamily. As to quaternary structure, monomer. [4Fe-4S] cluster serves as cofactor.

It is found in the cytoplasm. The enzyme catalyses N(6)-dimethylallyladenosine(37) in tRNA + (sulfur carrier)-SH + AH2 + 2 S-adenosyl-L-methionine = 2-methylsulfanyl-N(6)-dimethylallyladenosine(37) in tRNA + (sulfur carrier)-H + 5'-deoxyadenosine + L-methionine + A + S-adenosyl-L-homocysteine + 2 H(+). In terms of biological role, catalyzes the methylthiolation of N6-(dimethylallyl)adenosine (i(6)A), leading to the formation of 2-methylthio-N6-(dimethylallyl)adenosine (ms(2)i(6)A) at position 37 in tRNAs that read codons beginning with uridine. This is tRNA-2-methylthio-N(6)-dimethylallyladenosine synthase from Frankia alni (strain DSM 45986 / CECT 9034 / ACN14a).